The following is a 92-amino-acid chain: Small integral membrane protein 12 (92 aa).

Residues 15-34 (YVTFPVAFVVGAVGYHLEWF) form a helical membrane-spanning segment.

It belongs to the SMIM12 family.

It localises to the membrane. The protein is Small integral membrane protein 12 (Smim12) of Mus musculus (Mouse).